Reading from the N-terminus, the 282-residue chain is Reaction center protein L chain (282 aa).

Residues 2 to 32 lie on the Cytoplasmic side of the membrane; sequence ALLSFERKYRVPGGTLVGGNLFDFWVGPFYV. A helical transmembrane segment spans residues 33–56; the sequence is GFFGVATFFFAALGIILIAWSAVL. The Periplasmic portion of the chain corresponds to 57 to 83; sequence QGTWNPQLISVYPPALEYGLGGAPLAK. The helical transmembrane segment at 84-112 threads the bilayer; sequence GGLWQIITICATGAFVSWALREVEICRKL. The Cytoplasmic portion of the chain corresponds to 113-116; sequence GIGY. A helical transmembrane segment spans residues 117–139; that stretch reads HIPFAFAFAILAYLTLVLFRPVM. Residues 140-171 are Periplasmic-facing; it reads MGAWGYAFPYGIWTHLDWVSNTGYTYGNFHYN. (7R,8Z)-bacteriochlorophyll b contacts are provided by histidine 154 and histidine 174. The helical transmembrane segment at 172-199 threads the bilayer; the sequence is PAHMIAISFFFTNALALALHGALVLSAA. Histidine 191 serves as a coordination point for Fe cation. Residues 200–225 lie on the Cytoplasmic side of the membrane; sequence NPEKGKEMRTPDHEDTFFRDLVGYSI. Phenylalanine 217 lines the a ubiquinone pocket. Residues 226–251 traverse the membrane as a helical segment; the sequence is GTLGIHRLGLLLSLSAVFFSALCMII. Position 231 (histidine 231) interacts with Fe cation. The Periplasmic segment spans residues 252–282; it reads TGTIWFDQWVDWWQWWVKLPWWANIPGGING.

Belongs to the reaction center PufL/M/PsbA/D family. As to quaternary structure, reaction center is composed of four bacteriochlorophylls, two bacteriopheophytins, two ubiquinones, one iron, and three highly hydrophobic polypeptide chains (designated L, M, and H).

It is found in the cellular chromatophore membrane. Functionally, the reaction center is a membrane-bound complex that mediates the initial photochemical event in the electron transfer process of photosynthesis. The protein is Reaction center protein L chain (pufL) of Cereibacter sphaeroides (strain ATCC 17023 / DSM 158 / JCM 6121 / CCUG 31486 / LMG 2827 / NBRC 12203 / NCIMB 8253 / ATH 2.4.1.) (Rhodobacter sphaeroides).